Reading from the N-terminus, the 622-residue chain is MSQSSKTLKNMSKVNEAFIKPFPSSNKIYVQGSCKDIQVPMREIILTDTIGELAEKNAPIHVYDTSGVYTDPNVKIDLRKGLGSIRSTWIEQRNDTEILTKLSSNFSNERRDDAELDVLRFEHLQVPRRAKNTKNVSQMYYAKQGIITSEMEYIAIRENCKWQEYKDQIGQNEGESFGANIPDVITSEFVRDEVSKGRAVIPANINHPETEPMIIGRNFMVKINGNIGNSALGSSIEQEVDKMVWGIRWGADTIMDLSTGKNIHETREWIIRNSPVPIGTVPIYQTLEKVNGIAEDLTWEVFRDTLIEQAEQGVDYFTIHAGVRLQYVPLTINRIIGIVSRGGSIMAKWCLAHHTESFIYTHFEDICEIMKQYDVTFSLGDGLRPGCIADANDAAQFGELETLGELTKIAWKHDVQTFIEGPGHVPMQMIKENMDKQLKECGEAPFYTLGPLTTDIAPGYDHITSAIGAAQIGWYGCAMLCYVTPKEHLGLPNQDDVKQGIIAYKIAAHAADLAKGHPGAQIRDNALSKARFEFRWEDQFNLGLDPDTARKYHDETMPKQAAKTSHFCSMCGPKFCSMKITQEIKTIDAGEIAKIKAIQIEMDKKSAEFLKNDSEIYMKEGA.

Substrate is bound by residues asparagine 226, methionine 255, tyrosine 284, histidine 320, 340 to 342 (SRG), 381 to 384 (DGLR), and glutamate 420. Histidine 424 lines the Zn(2+) pocket. Tyrosine 447 provides a ligand contact to substrate. Histidine 488 is a Zn(2+) binding site. 3 residues coordinate [4Fe-4S] cluster: cysteine 568, cysteine 571, and cysteine 576.

Belongs to the ThiC family. As to quaternary structure, homodimer. The cofactor is [4Fe-4S] cluster.

The catalysed reaction is 5-amino-1-(5-phospho-beta-D-ribosyl)imidazole + S-adenosyl-L-methionine = 4-amino-2-methyl-5-(phosphooxymethyl)pyrimidine + CO + 5'-deoxyadenosine + formate + L-methionine + 3 H(+). Its pathway is cofactor biosynthesis; thiamine diphosphate biosynthesis. In terms of biological role, catalyzes the synthesis of the hydroxymethylpyrimidine phosphate (HMP-P) moiety of thiamine from aminoimidazole ribotide (AIR) in a radical S-adenosyl-L-methionine (SAM)-dependent reaction. The protein is Phosphomethylpyrimidine synthase of Ruthia magnifica subsp. Calyptogena magnifica.